The chain runs to 142 residues: Putative pre-16S rRNA nuclease (142 aa).

Belongs to the YqgF nuclease family.

It localises to the cytoplasm. Its function is as follows. Could be a nuclease involved in processing of the 5'-end of pre-16S rRNA. The protein is Putative pre-16S rRNA nuclease of Prosthecochloris aestuarii (strain DSM 271 / SK 413).